Consider the following 157-residue polypeptide: Peroxiredoxin Bcp (157 aa).

Positions 3 to 156 (IEIGQKAPDL…ALQTLKDMSE (154 aa)) constitute a Thioredoxin domain. Cys-45 (cysteine sulfenic acid (-SOH) intermediate) is an active-site residue. Residues Cys-45 and Cys-50 are joined by a disulfide bond.

The protein belongs to the peroxiredoxin family. BCP/PrxQ subfamily. In terms of assembly, monomer.

It catalyses the reaction a hydroperoxide + [thioredoxin]-dithiol = an alcohol + [thioredoxin]-disulfide + H2O. In terms of biological role, thiol-specific peroxidase that catalyzes the reduction of hydrogen peroxide and organic hydroperoxides to water and alcohols, respectively. Plays a role in cell protection against oxidative stress by detoxifying peroxides and as sensor of hydrogen peroxide-mediated signaling events. This chain is Peroxiredoxin Bcp (ygaF), found in Bacillus subtilis (strain 168).